The chain runs to 91 residues: Large ribosomal subunit protein bL27 (91 aa).

A disordered region spans residues 1 to 22; sequence MAHKKAGGSSRNGRDSDGRRLG.

This sequence belongs to the bacterial ribosomal protein bL27 family.

This is Large ribosomal subunit protein bL27 from Beijerinckia indica subsp. indica (strain ATCC 9039 / DSM 1715 / NCIMB 8712).